Reading from the N-terminus, the 360-residue chain is Phospho-N-acetylmuramoyl-pentapeptide-transferase (360 aa).

The next 10 helical transmembrane spans lie at 27–47, 71–91, 93–113, 128–148, 168–188, 199–219, 239–259, 262–282, 288–308, and 337–357; these read GAMI…INSL, TPTM…LLWA, LASV…AIGF, FSGK…AFTI, LVIN…VGAG, GLAI…AYLS, LAVV…FNAP, AIFM…TVAV, IVLA…IIQV, and QVVI…LSTL.

It belongs to the glycosyltransferase 4 family. MraY subfamily. The cofactor is Mg(2+).

It localises to the cell inner membrane. The catalysed reaction is UDP-N-acetyl-alpha-D-muramoyl-L-alanyl-gamma-D-glutamyl-meso-2,6-diaminopimeloyl-D-alanyl-D-alanine + di-trans,octa-cis-undecaprenyl phosphate = di-trans,octa-cis-undecaprenyl diphospho-N-acetyl-alpha-D-muramoyl-L-alanyl-D-glutamyl-meso-2,6-diaminopimeloyl-D-alanyl-D-alanine + UMP. It participates in cell wall biogenesis; peptidoglycan biosynthesis. In terms of biological role, catalyzes the initial step of the lipid cycle reactions in the biosynthesis of the cell wall peptidoglycan: transfers peptidoglycan precursor phospho-MurNAc-pentapeptide from UDP-MurNAc-pentapeptide onto the lipid carrier undecaprenyl phosphate, yielding undecaprenyl-pyrophosphoryl-MurNAc-pentapeptide, known as lipid I. This chain is Phospho-N-acetylmuramoyl-pentapeptide-transferase, found in Brucella ovis (strain ATCC 25840 / 63/290 / NCTC 10512).